A 314-amino-acid chain; its full sequence is Ferrochelatase (314 aa).

H184 and E259 together coordinate Fe cation.

The protein belongs to the ferrochelatase family.

The protein localises to the cytoplasm. It carries out the reaction heme b + 2 H(+) = protoporphyrin IX + Fe(2+). It participates in porphyrin-containing compound metabolism; protoheme biosynthesis; protoheme from protoporphyrin-IX: step 1/1. Functionally, catalyzes the ferrous insertion into protoporphyrin IX. The polypeptide is Ferrochelatase (Chlamydia trachomatis serovar A (strain ATCC VR-571B / DSM 19440 / HAR-13)).